We begin with the raw amino-acid sequence, 207 residues long: uncharacterized protein (207 aa).

Residues Arg80, Glu88, and Arg148 contribute to the active site.

The protein belongs to the thermonuclease family.

This is an uncharacterized protein from Methanocaldococcus jannaschii (strain ATCC 43067 / DSM 2661 / JAL-1 / JCM 10045 / NBRC 100440) (Methanococcus jannaschii).